Here is a 327-residue protein sequence, read N- to C-terminus: Phenylalanine--tRNA ligase alpha subunit (327 aa).

Glutamate 252 lines the Mg(2+) pocket.

It belongs to the class-II aminoacyl-tRNA synthetase family. Phe-tRNA synthetase alpha subunit type 1 subfamily. In terms of assembly, tetramer of two alpha and two beta subunits. Mg(2+) is required as a cofactor.

It is found in the cytoplasm. The enzyme catalyses tRNA(Phe) + L-phenylalanine + ATP = L-phenylalanyl-tRNA(Phe) + AMP + diphosphate + H(+). In Yersinia pestis bv. Antiqua (strain Antiqua), this protein is Phenylalanine--tRNA ligase alpha subunit.